The following is a 353-amino-acid chain: Photosystem II D2 protein (353 aa).

Thr-2 bears the N-acetylthreonine mark. At Thr-2 the chain carries Phosphothreonine. The chain crosses the membrane as a helical span at residues 41–61 (CAYFAVGGWFTGTTFVTSWYT). Residue His-118 participates in chlorophyll a binding. The helical transmembrane segment at 125 to 141 (GFMLRQFELARSVQLRP) threads the bilayer. Pheophytin a is bound by residues Gln-130 and Asn-143. Residues 153 to 166 (VFVSVFLIYPLGQS) traverse the membrane as a helical segment. Residue His-198 coordinates chlorophyll a. Residues 208–228 (AALLCAIHGATVENTLFEDGD) form a helical membrane-spanning segment. A plastoquinone contacts are provided by His-215 and Phe-262. His-215 contributes to the Fe cation binding site. His-269 serves as a coordination point for Fe cation. Residues 279 to 295 (GLWMSALGVVGLALNLR) form a helical membrane-spanning segment.

The protein belongs to the reaction center PufL/M/PsbA/D family. In terms of assembly, PSII is composed of 1 copy each of membrane proteins PsbA, PsbB, PsbC, PsbD, PsbE, PsbF, PsbH, PsbI, PsbJ, PsbK, PsbL, PsbM, PsbT, PsbX, PsbY, PsbZ, Psb30/Ycf12, at least 3 peripheral proteins of the oxygen-evolving complex and a large number of cofactors. It forms dimeric complexes. The D1/D2 heterodimer binds P680, chlorophylls that are the primary electron donor of PSII, and subsequent electron acceptors. It shares a non-heme iron and each subunit binds pheophytin, quinone, additional chlorophylls, carotenoids and lipids. There is also a Cl(-1) ion associated with D1 and D2, which is required for oxygen evolution. The PSII complex binds additional chlorophylls, carotenoids and specific lipids. is required as a cofactor.

The protein resides in the plastid. The protein localises to the chloroplast thylakoid membrane. It catalyses the reaction 2 a plastoquinone + 4 hnu + 2 H2O = 2 a plastoquinol + O2. Functionally, photosystem II (PSII) is a light-driven water:plastoquinone oxidoreductase that uses light energy to abstract electrons from H(2)O, generating O(2) and a proton gradient subsequently used for ATP formation. It consists of a core antenna complex that captures photons, and an electron transfer chain that converts photonic excitation into a charge separation. The D1/D2 (PsbA/PsbD) reaction center heterodimer binds P680, the primary electron donor of PSII as well as several subsequent electron acceptors. D2 is needed for assembly of a stable PSII complex. This is Photosystem II D2 protein from Solanum bulbocastanum (Wild potato).